Reading from the N-terminus, the 984-residue chain is Ephrin type-B receptor 1 (984 aa).

An N-terminal signal peptide occupies residues 1–17 (MALDCLLLFLLASAVAA). Residues 18–540 (MEETLMDTRT…YKSELREQLP (523 aa)) are Extracellular-facing. Residues 19–201 (EETLMDTRTA…FFKKCPSIVQ (183 aa)) form the Eph LBD domain. 2 consecutive Fibronectin type-III domains span residues 322–432 (VPSG…TNQA) and 433–528 (APST…TLTD). N-linked (GlcNAc...) asparagine glycans are attached at residues Asn334, Asn426, and Asn480. The helical transmembrane segment at 541–563 (LIAGSAAAGVVFVVSLVAISIVC) threads the bilayer. Topologically, residues 564–984 (SRKRAYSKEA…QMNQSPSVMA (421 aa)) are cytoplasmic. Tyr600 is subject to Phosphotyrosine. Positions 619 to 882 (VKIEEVIGAG…EIVNTLDKMI (264 aa)) constitute a Protein kinase domain. Residues 625–633 (IGAGEFGEV) and Lys651 each bind ATP. Asp744 (proton acceptor) is an active-site residue. Positions 911–975 (TAFTTVDDWL…LSSIHSMRVQ (65 aa)) constitute an SAM domain. Tyr928 is subject to Phosphotyrosine; by autocatalysis. The PDZ-binding motif lies at 982–984 (VMA).

It belongs to the protein kinase superfamily. Tyr protein kinase family. Ephrin receptor subfamily. As to quaternary structure, heterotetramer upon binding of the ligand. The heterotetramer is composed of an ephrin dimer and a receptor dimer. Oligomerization is probably required to induce biological responses. Interacts with EPHB6; transphosphorylates EPHB6 to form an active signaling complex. Interacts with PICK1. Interacts (through Tyr-594) with NCK1 (via SH2 domain); activates the JUN cascade to regulate cell adhesion. The ligand-activated form interacts (through Tyr-928) with GRB7 and GRB10 (via SH2 domains). The ligand-activated form interacts (residues within the catalytic domain) with GRB2 (via SH2 domain). Interacts with GRB2, SHC1 and SRC; activates the MAPK/ERK cascade to regulate cell migration. Interacts with CBL; regulates receptor degradation through ubiquitination. Interacts with ACP1. In terms of processing, phosphorylated. Autophosphorylation is stimulated by the ligand EFNB1. Required for interaction with SH2 domain-containing interactors, for activation of the MAPK/ERK and JUN signaling cascades and for ubiquitination by CBL. Post-translationally, ubiquitinated; (EFNB1)ligand-induced poly- and/or multi-ubiquitination by CBL is regulated by SRC and leads to lysosomal degradation. As to expression, restricted to brain and testes.

The protein resides in the cell membrane. The protein localises to the early endosome membrane. Its subcellular location is the cell projection. It is found in the dendrite. It carries out the reaction L-tyrosyl-[protein] + ATP = O-phospho-L-tyrosyl-[protein] + ADP + H(+). Its function is as follows. Receptor tyrosine kinase which binds promiscuously transmembrane ephrin-B family ligands residing on adjacent cells, leading to contact-dependent bidirectional signaling into neighboring cells. The signaling pathway downstream of the receptor is referred to as forward signaling while the signaling pathway downstream of the ephrin ligand is referred to as reverse signaling. Cognate/functional ephrin ligands for this receptor include EFNB1, EFNB2 and EFNB3. During nervous system development, regulates retinal axon guidance redirecting ipsilaterally ventrotemporal retinal ganglion cells axons at the optic chiasm midline. This probably requires repulsive interaction with EFNB2. In the adult nervous system together with EFNB3, regulates chemotaxis, proliferation and polarity of the hippocampus neural progenitors. In addition to its role in axon guidance also plays an important redundant role with other ephrin-B receptors in development and maturation of dendritic spines and synapse formation. May also regulate angiogenesis. More generally, may play a role in targeted cell migration and adhesion. Upon activation by EFNB1 and probably other ephrin-B ligands activates the MAPK/ERK and the JNK signaling cascades to regulate cell migration and adhesion respectively. Involved in the maintenance of the pool of satellite cells (muscle stem cells) by promoting their self-renewal and reducing their activation and differentiation. The protein is Ephrin type-B receptor 1 (Ephb1) of Rattus norvegicus (Rat).